The primary structure comprises 710 residues: Mitochondrial intermediate peptidase (710 aa).

The transit peptide at 1-33 (MLLAAGTRYAYRLCGRRAAAALQGRAGRSCARS) directs the protein to the mitochondrion. Lysine 124 carries the N6-acetyllysine modification. Residue histidine 492 coordinates Zn(2+). Glutamate 493 is a catalytic residue. Zn(2+)-binding residues include histidine 496 and histidine 499.

It belongs to the peptidase M3 family. In terms of assembly, monomer. Zn(2+) serves as cofactor.

It localises to the mitochondrion matrix. The catalysed reaction is Release of an N-terminal octapeptide as second stage of processing of some proteins imported into the mitochondrion.. Activity is divalent cation-dependent. It is stimulated by manganese, magnesium or calcium ions and reversibly inhibited by zinc, cobalt and iron. Its function is as follows. Cleaves proteins, imported into the mitochondrion, to their mature size. In Rattus norvegicus (Rat), this protein is Mitochondrial intermediate peptidase (Mipep).